A 933-amino-acid polypeptide reads, in one-letter code: Neuronal PAS domain-containing protein 4A (933 aa).

Positions Met-1 to Arg-13 are basic motif; degenerate. The 53-residue stretch at Met-1–Ser-53 folds into the bHLH domain. The interval Asp-14 to Ser-53 is helix-loop-helix motif. PAS domains are found at residues Ser-74–Asp-148 and Thr-220–Gly-290. The PAC domain occupies Ala-295–Thr-334. Positions Gln-361–Cys-398 are enriched in polar residues. Disordered regions lie at residues Gln-361–Pro-451, Gly-514–Leu-573, and Asp-750–Pro-776. Composition is skewed to low complexity over residues Ser-399 to Ser-411, Glu-440 to Pro-451, Gly-538 to Gln-560, and Leu-751 to Pro-769.

As to quaternary structure, efficient DNA binding requires dimerization with another bHLH protein. In terms of tissue distribution, brain-specific.

Its subcellular location is the nucleus. In terms of biological role, transcription factor expressed in neurons of the brain that regulates the excitatory-inhibitory balance within neural circuits and is required for contextual memory in the hippocampus. Plays a key role in the structural and functional plasticity of neurons. Acts as an early-response transcription factor in both excitatory and inhibitory neurons, where it induces distinct but overlapping sets of late-response genes in these two types of neurons, allowing the synapses that form on inhibitory and excitatory neurons to be modified by neuronal activity in a manner specific to their function within a circuit, thereby facilitating appropriate circuit responses to sensory experience. In Danio rerio (Zebrafish), this protein is Neuronal PAS domain-containing protein 4A (npas4a).